We begin with the raw amino-acid sequence, 210 residues long: MNSLIMVIIALIAAYFIGSTPAPYLAGRIFKGIDIRTVGSKNMGSMNVFYNVGFWPGILVLAVDIGKGALAMAVANWLGEGLGIQMLCALMAIAGHNYPVWLKFKGGKGGATAIGILAYLMPEGIPIYIACFLVLMAITRFPTLSYGISFLSFILVAWLGQHDLGKVLFSLLVVMIPIIMYIPRMKEIKNKAGSGNAKRAIFRKNLKERL.

A run of 6 helical transmembrane segments spans residues 4–24 (LIMVIIALIAAYFIGSTPAPY), 54–74 (FWPGILVLAVDIGKGALAMAV), 82–102 (LGIQMLCALMAIAGHNYPVWL), 114–134 (IGILAYLMPEGIPIYIACFLV), 141–161 (FPTLSYGISFLSFILVAWLGQ), and 163–183 (DLGKVLFSLLVVMIPIIMYIP).

It belongs to the PlsY family. Probably interacts with PlsX.

It localises to the cell membrane. It carries out the reaction an acyl phosphate + sn-glycerol 3-phosphate = a 1-acyl-sn-glycero-3-phosphate + phosphate. Its pathway is lipid metabolism; phospholipid metabolism. In terms of biological role, catalyzes the transfer of an acyl group from acyl-phosphate (acyl-PO(4)) to glycerol-3-phosphate (G3P) to form lysophosphatidic acid (LPA). This enzyme utilizes acyl-phosphate as fatty acyl donor, but not acyl-CoA or acyl-ACP. This Dehalococcoides mccartyi (strain ATCC BAA-2266 / KCTC 15142 / 195) (Dehalococcoides ethenogenes (strain 195)) protein is Glycerol-3-phosphate acyltransferase 2.